Here is a 373-residue protein sequence, read N- to C-terminus: D-alanine--D-alanine ligase (373 aa).

The 208-residue stretch at Lys156–Glu363 folds into the ATP-grasp domain. Cys184 to Glu239 contacts ATP. 3 residues coordinate Mg(2+): Asp318, Glu330, and Asn332.

The protein belongs to the D-alanine--D-alanine ligase family. Requires Mg(2+) as cofactor. Mn(2+) is required as a cofactor.

It localises to the cytoplasm. It catalyses the reaction 2 D-alanine + ATP = D-alanyl-D-alanine + ADP + phosphate + H(+). It participates in cell wall biogenesis; peptidoglycan biosynthesis. Functionally, cell wall formation. The sequence is that of D-alanine--D-alanine ligase from Mycobacterium tuberculosis (strain ATCC 25177 / H37Ra).